Reading from the N-terminus, the 339-residue chain is Methylcobamide:CoM methyltransferase MtaA (339 aa).

Zn(2+) contacts are provided by His-237, Cys-239, and Cys-316.

Belongs to the uroporphyrinogen decarboxylase family. MtbA/mtaA subfamily. Requires Zn(2+) as cofactor.

It carries out the reaction methyl-Co(III)-[methanol-specific corrinoid protein] + coenzyme M = Co(I)-[methanol-specific corrinoid protein] + methyl-coenzyme M + H(+). Functionally, methyltransferase involved in methanogenesis in the methanol pathway. Catalyzes the transfer of the methyl group from the methylated corrinoid protein MtaC to coenzyme M, forming the substrate for coenzyme-B sulfoethylthiotransferase. MtaC can be substituted by free cob(I)alamin in vitro. This Methanosarcina barkeri protein is Methylcobamide:CoM methyltransferase MtaA (mtaA).